We begin with the raw amino-acid sequence, 526 residues long: MATKTDDFAPFPVKDQLPGVEFCVSSSPNWPEGIVLGFQHYIVMLGTTVIIPSILVPLMGGGDVEKAEVINTVLFVSGINTLLQSLFGSRLPVVMGASYAYLIPALYITFSYRFTYYLHPHLRFEETMRAIQGALIIASISHMIMGFFGLWRILVRFLSPLSAAPLVILTGVGLLAFAFPQLARCIEIGLPALIILIILSQYLPHLFKCKRSICEQFAVLFTIAIVWAYAEILTAAGAYDKRPDNTQLSCRTDRSGLISASPWVRIPYPLQWGRPSFHGSDAFAMMAATYVAIVETTGSFIAASRFGSATHIPPSVLSRGIGWQGIGVLLNGLFGTATGSTALVENTGLLGLTKVGSRRVVQISAGFMIFFSIFGKFGAVLASIPLPIFAALYCVLFAYVASAGLGLLQFCNLNSFRNKFILGFSIFIGLSVAQYFTEYLFISGRGPVHTRTSAFNVIMQVIFSSAATVGIMAAFLLDCTHSYGHASVRRDSGRHWWEKFRVYHTDTRTEEFYALPYNLNRFFPSF.

The next 12 membrane-spanning stretches (helical) occupy residues 42-62 (IVML…MGGG), 69-89 (VINT…LFGS), 91-111 (LPVV…ITFS), 131-151 (IQGA…FGLW), 157-177 (FLSP…LLAF), 186-206 (IEIG…LPHL), 217-237 (FAVL…TAAG), 282-302 (AFAM…SFIA), 359-381 (RVVQ…GAVL), 388-410 (IFAA…LLQF), 420-440 (FILG…TEYL), and 457-477 (VIMQ…AFLL).

It belongs to the nucleobase:cation symporter-2 (NCS2) (TC 2.A.40) family. As to expression, highly expressed in the root central cylinder. Expressed in the filaments and stigmatic papillae of pollinated flowers and developing siliques.

The protein resides in the membrane. The protein is Nucleobase-ascorbate transporter 4 (NAT4) of Arabidopsis thaliana (Mouse-ear cress).